A 55-amino-acid polypeptide reads, in one-letter code: SFCLEPKRVGRCKGYFPRFYFDSKTGKCTPFIYGGCGGNGNNFETLHQCRAICRA.

The BPTI/Kunitz inhibitor domain occupies 3–53; the sequence is CLEPKRVGRCKGYFPRFYFDSKTGKCTPFIYGGCGGNGNNFETLHQCRAIC. Cystine bridges form between cysteine 3–cysteine 53, cysteine 12–cysteine 36, and cysteine 28–cysteine 49.

This sequence belongs to the venom Kunitz-type family. Sea anemone type 2 potassium channel toxin subfamily.

The protein resides in the secreted. Its subcellular location is the nematocyst. Inhibitor of serine, cysteine, and aspartic proteinases. The protein is PI-stichotoxin-She2b of Stichodactyla helianthus (Sun anemone).